Reading from the N-terminus, the 219-residue chain is 2,5-diamino-6-ribosylamino-4(3H)-pyrimidinone 5'-phosphate reductase (219 aa).

Residues Thr52, Asp56, 87 to 90 (SRCR), Val134, and 156 to 159 (GGTL) each bind NADP(+).

Belongs to the HTP reductase family. Homodimer.

It carries out the reaction 2,5-diamino-6-(1-D-ribitylamino)pyrimidin-4(3H)-one 5'-phosphate + NADP(+) = 2,5-diamino-6-(1-D-ribosylamino)pyrimidin-4(3H)-one 5'-phosphate + NADPH + H(+). The catalysed reaction is 2,5-diamino-6-(1-D-ribitylamino)pyrimidin-4(3H)-one 5'-phosphate + NAD(+) = 2,5-diamino-6-(1-D-ribosylamino)pyrimidin-4(3H)-one 5'-phosphate + NADH + H(+). The protein operates within cofactor biosynthesis; riboflavin biosynthesis. Functionally, catalyzes an early step in riboflavin biosynthesis, the NADPH-dependent reduction of the ribose side chain of 2,5-diamino-6-ribosylamino-4(3H)-pyrimidinone 5'-phosphate, yielding 2,5-diamino-6-ribitylamino-4(3H)-pyrimidinone 5'-phosphate. The chain is 2,5-diamino-6-ribosylamino-4(3H)-pyrimidinone 5'-phosphate reductase from Archaeoglobus fulgidus (strain ATCC 49558 / DSM 4304 / JCM 9628 / NBRC 100126 / VC-16).